The following is a 183-amino-acid chain: Ribosome-recycling factor (183 aa).

Belongs to the RRF family.

It is found in the cytoplasm. In terms of biological role, responsible for the release of ribosomes from messenger RNA at the termination of protein biosynthesis. May increase the efficiency of translation by recycling ribosomes from one round of translation to another. This is Ribosome-recycling factor from Afipia carboxidovorans (strain ATCC 49405 / DSM 1227 / KCTC 32145 / OM5) (Oligotropha carboxidovorans).